The chain runs to 238 residues: Small ribosomal subunit protein uS2 (238 aa).

This sequence belongs to the universal ribosomal protein uS2 family.

This Synechococcus sp. (strain CC9605) protein is Small ribosomal subunit protein uS2.